The primary structure comprises 30 residues: NADH-ubiquinone oxidoreductase 18 kDa subunit (30 aa).

In terms of assembly, complex I is composed of about 45 different subunits.

It is found in the mitochondrion inner membrane. The enzyme catalyses a ubiquinone + NADH + 5 H(+)(in) = a ubiquinol + NAD(+) + 4 H(+)(out). Functionally, transfer of electrons from NADH to the respiratory chain. The immediate electron acceptor for the enzyme is believed to be ubiquinone. The protein is NADH-ubiquinone oxidoreductase 18 kDa subunit of Solanum tuberosum (Potato).